The following is a 432-amino-acid chain: Interleukin-11 receptor subunit alpha-2 (432 aa).

The signal sequence occupies residues 1–23 (MSSSCSGLTRVLVAVATALVSSS). Topologically, residues 24 to 372 (SPCPQAWGPP…DPLEQVAVLA (349 aa)) are extracellular. The Ig-like C2-type domain occupies 27 to 110 (PQAWGPPGVQ…SGGMVTLKLG (84 aa)). 3 cysteine pairs are disulfide-bonded: cysteine 48–cysteine 94, cysteine 120–cysteine 130, and cysteine 170–cysteine 180. 2 Fibronectin type-III domains span residues 112–219 (PPAR…LRPD) and 220–317 (PPQG…TPST). Asparagine 127 carries N-linked (GlcNAc...) asparagine glycosylation. The segment at 151–170 (KTLPGAESQRESPSTGPWPC) is disordered. Asparagine 194 is a glycosylation site (N-linked (GlcNAc...) asparagine). A WSXWS motif motif is present at residues 304-308 (WSAWS). A helical transmembrane segment spans residues 373 to 393 (SLGIFSCLGLAVGALALGLWL). Residues 394–432 (RLRRSGKEGPQKPGLLAPMIPVEKLPGIPNLQRTPENFS) are Cytoplasmic-facing.

It belongs to the type I cytokine receptor family. Type 3 subfamily. On ligand binding, forms a multimer complex with IL6ST/gp130. As to expression, expression restricted to testis, lymph node and thymus. Highest level in testis.

Its subcellular location is the membrane. Its function is as follows. Receptor for interleukin-11. The receptor systems for IL6, LIF, OSM, CNTF, IL11 and CT1 can utilize IL6ST for initiating signal transmission. The IL11/IL11RA/IL6ST complex may be involved in the control of proliferation and/or differentiation of skeletogenic progenitor or other mesenchymal cells. This is Interleukin-11 receptor subunit alpha-2 (Il11ra2) from Mus musculus (Mouse).